The following is a 158-amino-acid chain: NAD(P)H-quinone oxidoreductase subunit J, chloroplastic (158 aa).

It belongs to the complex I 30 kDa subunit family. As to quaternary structure, NDH is composed of at least 16 different subunits, 5 of which are encoded in the nucleus.

Its subcellular location is the plastid. The protein resides in the chloroplast thylakoid membrane. It carries out the reaction a plastoquinone + NADH + (n+1) H(+)(in) = a plastoquinol + NAD(+) + n H(+)(out). It catalyses the reaction a plastoquinone + NADPH + (n+1) H(+)(in) = a plastoquinol + NADP(+) + n H(+)(out). NDH shuttles electrons from NAD(P)H:plastoquinone, via FMN and iron-sulfur (Fe-S) centers, to quinones in the photosynthetic chain and possibly in a chloroplast respiratory chain. The immediate electron acceptor for the enzyme in this species is believed to be plastoquinone. Couples the redox reaction to proton translocation, and thus conserves the redox energy in a proton gradient. The sequence is that of NAD(P)H-quinone oxidoreductase subunit J, chloroplastic from Angiopteris evecta (Mule's foot fern).